A 205-amino-acid polypeptide reads, in one-letter code: Holliday junction branch migration complex subunit RuvA (205 aa).

The domain I stretch occupies residues 1 to 64 (MIGKLKGTID…EDQLRLFGFL (64 aa)). The segment at 65–143 (SALEREWFRL…AFAGEMSASI (79 aa)) is domain II. Positions 144–153 (GLKQELGEGV) are flexible linker. The tract at residues 153–205 (VAAAPVSDAVSALTNLGYSRDQAANAVAAALKNGGEGGDSAKLIRLGLKELAR) is domain III.

It belongs to the RuvA family. As to quaternary structure, homotetramer. Forms an RuvA(8)-RuvB(12)-Holliday junction (HJ) complex. HJ DNA is sandwiched between 2 RuvA tetramers; dsDNA enters through RuvA and exits via RuvB. An RuvB hexamer assembles on each DNA strand where it exits the tetramer. Each RuvB hexamer is contacted by two RuvA subunits (via domain III) on 2 adjacent RuvB subunits; this complex drives branch migration. In the full resolvosome a probable DNA-RuvA(4)-RuvB(12)-RuvC(2) complex forms which resolves the HJ.

The protein resides in the cytoplasm. In terms of biological role, the RuvA-RuvB-RuvC complex processes Holliday junction (HJ) DNA during genetic recombination and DNA repair, while the RuvA-RuvB complex plays an important role in the rescue of blocked DNA replication forks via replication fork reversal (RFR). RuvA specifically binds to HJ cruciform DNA, conferring on it an open structure. The RuvB hexamer acts as an ATP-dependent pump, pulling dsDNA into and through the RuvAB complex. HJ branch migration allows RuvC to scan DNA until it finds its consensus sequence, where it cleaves and resolves the cruciform DNA. In Sinorhizobium fredii (strain NBRC 101917 / NGR234), this protein is Holliday junction branch migration complex subunit RuvA.